The primary structure comprises 2364 residues: Spectrin beta chain, non-erythrocytic 1 (2364 aa).

Thr2 carries the post-translational modification N-acetylthreonine. An actin-binding region spans residues 2–275 (TTTVATDYDN…IITYVVTYYH (274 aa)). A phosphoserine mark is found at Ile14 and Ser36. Calponin-homology (CH) domains are found at residues 54 to 158 (AVQK…LRFQ) and 173 to 278 (KSAK…HYFS). Lys90 bears the N6-acetyllysine mark. Phosphoserine is present on Ser228. Spectrin repeat units follow at residues 303–411 (MIEK…LALR), 423–525 (LARR…QRLE), 530–636 (LQKI…RLEE), 639–742 (RLWK…RLEE), 745–847 (LLHQ…ALQD), 850–952 (ALYK…DALL), 957–1060 (IQNY…SLGE), 1063–1166 (KLQQ…NLLS), 1170–1258 (AYQQ…DRHR), 1276–1376 (DLQK…AQRL), 1381–1482 (KAEL…HNLL), 1486–1590 (EIHQ…RLEE), 1592–1696 (HRAQ…KLDE), 1698–1801 (HRLF…TQIL), and 1805–1907 (YELH…RVRL). Ser817, Ser825, Ser903, Ser1057, Ser1076, Ser1079, and Ser1237 each carry phosphoserine. 3 positions are modified to phosphoserine: Ser1388, Ser1447, and Ser1557. The tract at residues 1563-2093 (IRQRLADLKQ…LLEVRRQQEE (531 aa)) is interaction with ANK2. A Phosphotyrosine modification is found at Tyr1805. Residues Lys1815, Lys1913, and Lys1989 each carry the N6-acetyllysine modification. Spectrin repeat units lie at residues 1914 to 2014 (FRFF…EWLR) and 2018 to 2097 (EVHQ…EERK). The interval 2089–2196 (RQQEEEERKR…TLPARTQETP (108 aa)) is disordered. A phosphoserine mark is found at Ser2102, Ser2128, and Ser2138. A compositionally biased stretch (polar residues) spans 2115–2131 (SQQQWDTSKGEQVSQNG). The segment covering 2145 to 2166 (VDTSEMVNGATEQRTSSKESSP) has biased composition (polar residues). Thr2147 bears the Phosphothreonine mark. Ser2148 carries the post-translational modification Phosphoserine. Residues 2149–2177 (EMVNGATEQRTSSKESSPIPSPTSDRKAK) are mediates interaction with CAMSAP1. A Phosphothreonine modification is found at Thr2159. A phosphoserine mark is found at Ser2160, Ser2161, Ser2164, Ser2165, and Ser2169. Residue Thr2171 is modified to Phosphothreonine. Phosphoserine is present on residues Ser2172 and Ser2184. Polar residues predominate over residues 2184–2196 (SAATLPARTQETP). Phosphothreonine is present on residues Thr2187 and Thr2195. Residues 2197–2307 (SAQMEGFLNR…WIQAISSAIS (111 aa)) enclose the PH domain. The tract at residues 2309–2364 (DKHEVSASTQSTPASSRAQTLPTSVVTITSESSPGKREKDKEKDKEKRFSLFGKKK) is disordered. A phosphoserine mark is found at Ser2314 and Ser2319. Residues 2314–2341 (SASTQSTPASSRAQTLPTSVVTITSESS) are compositionally biased toward polar residues. Thr2320 bears the Phosphothreonine mark. Ser2324 is a glycosylation site (O-linked (GlcNAc) serine). Phosphothreonine is present on Thr2328. Ser2340 and Ser2341 each carry phosphoserine. The span at 2342 to 2357 (PGKREKDKEKDKEKRF) shows a compositional bias: basic and acidic residues.

It belongs to the spectrin family. Interacts with CAMSAP1. Interacts with ANK2. Interacts with CPNE4 (via VWFA domain). Like erythrocyte spectrin, the spectrin-like proteins are capable to form dimers which can further associate to tetramers. Can form heterodimers with SPTAN1. Isoform Short cannot bind to the axonal protein fodaxin. Isoform 2 is present in brain, lung and kidney (at protein level).

The protein resides in the cytoplasm. It is found in the cytoskeleton. Its subcellular location is the myofibril. It localises to the sarcomere. The protein localises to the m line. The protein resides in the cytosol. It is found in the cell membrane. Its function is as follows. Fodrin, which seems to be involved in secretion, interacts with calmodulin in a calcium-dependent manner and is thus candidate for the calcium-dependent movement of the cytoskeleton at the membrane. Plays a critical role in central nervous system development and function. In Homo sapiens (Human), this protein is Spectrin beta chain, non-erythrocytic 1 (SPTBN1).